A 632-amino-acid chain; its full sequence is tRNA uridine 5-carboxymethylaminomethyl modification enzyme MnmG (632 aa).

Position 15 to 20 (15 to 20) interacts with FAD; sequence GAGHAG. A disordered region spans residues 205–231; sequence PRVDGNTIDYSKTQEEPGDKEPRHFSY. Residues 216 to 228 show a composition bias toward basic and acidic residues; that stretch reads KTQEEPGDKEPRH. An NAD(+)-binding site is contributed by 276–290; the sequence is GPRYCPSIEDKVVRF.

This sequence belongs to the MnmG family. As to quaternary structure, homodimer. Heterotetramer of two MnmE and two MnmG subunits. It depends on FAD as a cofactor.

The protein localises to the cytoplasm. In terms of biological role, NAD-binding protein involved in the addition of a carboxymethylaminomethyl (cmnm) group at the wobble position (U34) of certain tRNAs, forming tRNA-cmnm(5)s(2)U34. The polypeptide is tRNA uridine 5-carboxymethylaminomethyl modification enzyme MnmG (Lactobacillus johnsonii (strain CNCM I-12250 / La1 / NCC 533)).